The sequence spans 94 residues: Translation initiation factor IF-1 (94 aa).

The S1-like domain maps to 1–72; the sequence is MAKEELIQFE…EKGRLIFRHK (72 aa). The interval 71–94 is disordered; it reads HKDERPGGTGAPRGAPPRGQFRRR. Positions 82 to 94 are enriched in low complexity; sequence PRGAPPRGQFRRR.

This sequence belongs to the IF-1 family. Component of the 30S ribosomal translation pre-initiation complex which assembles on the 30S ribosome in the order IF-2 and IF-3, IF-1 and N-formylmethionyl-tRNA(fMet); mRNA recruitment can occur at any time during PIC assembly.

The protein localises to the cytoplasm. One of the essential components for the initiation of protein synthesis. Stabilizes the binding of IF-2 and IF-3 on the 30S subunit to which N-formylmethionyl-tRNA(fMet) subsequently binds. Helps modulate mRNA selection, yielding the 30S pre-initiation complex (PIC). Upon addition of the 50S ribosomal subunit IF-1, IF-2 and IF-3 are released leaving the mature 70S translation initiation complex. The protein is Translation initiation factor IF-1 of Rhodopseudomonas palustris (strain BisB5).